The chain runs to 311 residues: ADP-L-glycero-D-manno-heptose-6-epimerase (311 aa).

Residues 10-11, 31-32, K38, K53, 75-79, and N92 contribute to the NADP(+) site; these read FI, DD, and EGACS. The Proton acceptor role is filled by Y139. Residue K143 coordinates NADP(+). N174 lines the substrate pocket. Residues V175 and K183 each contribute to the NADP(+) site. K183 acts as the Proton acceptor in catalysis. Residues S185, H192, 206–209, R212, and Y275 contribute to the substrate site; that span reads FEGE.

Belongs to the NAD(P)-dependent epimerase/dehydratase family. HldD subfamily. In terms of assembly, homopentamer. NADP(+) serves as cofactor.

It carries out the reaction ADP-D-glycero-beta-D-manno-heptose = ADP-L-glycero-beta-D-manno-heptose. It functions in the pathway nucleotide-sugar biosynthesis; ADP-L-glycero-beta-D-manno-heptose biosynthesis; ADP-L-glycero-beta-D-manno-heptose from D-glycero-beta-D-manno-heptose 7-phosphate: step 4/4. Its function is as follows. Catalyzes the interconversion between ADP-D-glycero-beta-D-manno-heptose and ADP-L-glycero-beta-D-manno-heptose via an epimerization at carbon 6 of the heptose. This chain is ADP-L-glycero-D-manno-heptose-6-epimerase, found in Psychromonas ingrahamii (strain DSM 17664 / CCUG 51855 / 37).